Here is a 173-residue protein sequence, read N- to C-terminus: MQIVSELVIMGRIVAPYGVYGWVKVQPATEYVDSLFDYGRWMLGRGDPKQPEQWQSCEVEKAKVHNDLLLVKLQGIDDRDQAFSCKGMYVAVYRDELPEPEEGEYYWSDLIGLQVRNQQEVDFGQVVDVFATGANDVLVVKGDRERLVPFIGQVVLEVDTDGKTMLVDWDPEF.

In terms of domain architecture, PRC barrel spans Glu-102–Phe-173.

It belongs to the RimM family. As to quaternary structure, binds ribosomal protein uS19.

The protein resides in the cytoplasm. Functionally, an accessory protein needed during the final step in the assembly of 30S ribosomal subunit, possibly for assembly of the head region. Essential for efficient processing of 16S rRNA. May be needed both before and after RbfA during the maturation of 16S rRNA. It has affinity for free ribosomal 30S subunits but not for 70S ribosomes. This is Ribosome maturation factor RimM from Methylobacillus flagellatus (strain ATCC 51484 / DSM 6875 / VKM B-1610 / KT).